The chain runs to 104 residues: Co-chaperonin GroES 1 (104 aa).

This sequence belongs to the GroES chaperonin family. As to quaternary structure, heptamer of 7 subunits arranged in a ring. Interacts with the chaperonin GroEL.

The protein resides in the cytoplasm. Functionally, together with the chaperonin GroEL, plays an essential role in assisting protein folding. The GroEL-GroES system forms a nano-cage that allows encapsulation of the non-native substrate proteins and provides a physical environment optimized to promote and accelerate protein folding. GroES binds to the apical surface of the GroEL ring, thereby capping the opening of the GroEL channel. This is Co-chaperonin GroES 1 from Mesorhizobium japonicum (strain LMG 29417 / CECT 9101 / MAFF 303099) (Mesorhizobium loti (strain MAFF 303099)).